The primary structure comprises 452 residues: Multifunctional glycoside hydrolase (452 aa).

Residues Gln-17, His-118, and Asn-162 each coordinate substrate. Glu-163 (proton donor) is an active-site residue. Tyr-303 is a binding site for substrate. Catalysis depends on Glu-361, which acts as the Nucleophile. Substrate is bound by residues Trp-407 and 414-415 (EW).

Belongs to the glycosyl hydrolase 1 family. Monomer. Homotrimer.

It carries out the reaction Hydrolysis of terminal, non-reducing beta-D-glucosyl residues with release of beta-D-glucose.. It catalyses the reaction Hydrolysis of terminal non-reducing beta-D-galactose residues in beta-D-galactosides.. The enzyme catalyses Hydrolysis of (1-&gt;4)-beta-D-xylans, to remove successive D-xylose residues from the non-reducing termini.. The catalysed reaction is Hydrolysis of (1-&gt;4)-linkages in (1-&gt;4)-beta-D-glucans, to remove successive glucose units.. It carries out the reaction Hydrolysis of (1-&gt;4)-beta-D-glucosidic linkages in cellulose and cellotetraose, releasing cellobiose from the non-reducing ends of the chains.. It participates in glycan metabolism; beta-D-glucan degradation. Its pathway is glycan metabolism; cellulose degradation. With respect to regulation, slight activation by Mn(2+), Ni(2+) and K(+). Slight inhibition by Fe(3+), Zn(2+), Co(2+), Mg(2+), Cu(2+), Na(+) and NH4(+). Its function is as follows. Has high beta-D-glucosidase, exoglucanase, beta-D-xylosidase, beta-D-galactosidase, and transgalactosylation activities in vitro. Has a very broad substrate specificity with the highest activity with p-nitrophenyl beta-D-galactopyranoside (pNPGal) as substrate. Active with pNP-beta-D-glucopyranoside (pNPGlu), pNP-beta-D-cellobioside (pNPC), lactose, pNP-beta-D-xylopyranoside (pNPX) and cellobiose in the order of decreasing activity, respectively. Very low activity with soluble polysaccharides synanthrin and locust bean gum. Very low, but detectable activity with insoluble substrates such as cotton and filter paper. No activity with pNP-alpha-L-arabinofuranoside (pNPAr) or carboxymethylcellulose (CMC) as substrates. Synthesizes galactooligosaccharides (GalOS) from lactose. Hydrolyzes pretreated corn stover releasing both glucose and xylose. This multifunctional enzyme may provide C.owensensis the benefit of utilizing a wide variety of available carbon sources in its natural growing environment as the ability to convert a wide range of soluble oligosaccharides to monoses is required in order to assimilate them. This chain is Multifunctional glycoside hydrolase, found in Caldicellulosiruptor owensensis (strain ATCC 700167 / DSM 13100 / OL).